A 280-amino-acid chain; its full sequence is Small ribosomal subunit protein uS3 (280 aa).

Positions 38-106 constitute a KH type-2 domain; the sequence is IRKLLATGLE…QVQLNILEVK (69 aa). Positions 216–280 are disordered; sequence AAAPAADRPR…SAGQPETTES (65 aa). A compositionally biased stretch (low complexity) spans 237 to 270; sequence SGASGTTATSTDAGRAASEGTVEAPATEAAATAP.

The protein belongs to the universal ribosomal protein uS3 family. Part of the 30S ribosomal subunit. Forms a tight complex with proteins S10 and S14.

Its function is as follows. Binds the lower part of the 30S subunit head. Binds mRNA in the 70S ribosome, positioning it for translation. This chain is Small ribosomal subunit protein uS3, found in Mycolicibacterium vanbaalenii (strain DSM 7251 / JCM 13017 / BCRC 16820 / KCTC 9966 / NRRL B-24157 / PYR-1) (Mycobacterium vanbaalenii).